The chain runs to 123 residues: Proteasome assembly chaperone 4 (123 aa).

The protein belongs to the PSMG4 family. In terms of assembly, interacts with PSMG3. Associates with alpha subunits of the 20S proteasome.

Its function is as follows. Chaperone protein which promotes assembly of the 20S proteasome. This Homo sapiens (Human) protein is Proteasome assembly chaperone 4.